The sequence spans 411 residues: ATP-dependent Clp protease ATP-binding subunit ClpX (411 aa).

Residues 1 to 49 (MSDRDIRCSFCGRTQKEVKKLIAGPGVYICDECVKLAYDIIEEDEEEDV) form the ClpX-type ZB domain. Residues Cys-8, Cys-11, Cys-30, and Cys-33 each contribute to the Zn(2+) site. 115 to 122 (PTGVGKTL) provides a ligand contact to ATP.

It belongs to the ClpX chaperone family. Component of the ClpX-ClpP complex. Forms a hexameric ring that, in the presence of ATP, binds to fourteen ClpP subunits assembled into a disk-like structure with a central cavity, resembling the structure of eukaryotic proteasomes.

Its function is as follows. ATP-dependent specificity component of the Clp protease. It directs the protease to specific substrates. Can perform chaperone functions in the absence of ClpP. The protein is ATP-dependent Clp protease ATP-binding subunit ClpX of Dictyoglomus thermophilum (strain ATCC 35947 / DSM 3960 / H-6-12).